The sequence spans 293 residues: 33 kDa chaperonin (293 aa).

2 cysteine pairs are disulfide-bonded: cysteine 230–cysteine 232 and cysteine 263–cysteine 266.

It belongs to the HSP33 family. Under oxidizing conditions two disulfide bonds are formed involving the reactive cysteines. Under reducing conditions zinc is bound to the reactive cysteines and the protein is inactive.

Its subcellular location is the cytoplasm. Its function is as follows. Redox regulated molecular chaperone. Protects both thermally unfolding and oxidatively damaged proteins from irreversible aggregation. Plays an important role in the bacterial defense system toward oxidative stress. The polypeptide is 33 kDa chaperonin (Edwardsiella ictaluri (strain 93-146)).